A 376-amino-acid polypeptide reads, in one-letter code: Putative glutamate--cysteine ligase 2-3 (376 aa).

The protein belongs to the glutamate--cysteine ligase type 2 family. YbdK subfamily.

The catalysed reaction is L-cysteine + L-glutamate + ATP = gamma-L-glutamyl-L-cysteine + ADP + phosphate + H(+). Functionally, ATP-dependent carboxylate-amine ligase which exhibits weak glutamate--cysteine ligase activity. The protein is Putative glutamate--cysteine ligase 2-3 of Nocardioides sp. (strain ATCC BAA-499 / JS614).